The chain runs to 214 residues: Mexicain (214 aa).

Cystine bridges form between Cys-22–Cys-63, Cys-56–Cys-95, and Cys-153–Cys-200. Cys-25 is an active-site residue. Residue Cys-25 coordinates E64. Active-site residues include His-159 and Asn-175.

Belongs to the peptidase C1 family. In terms of tissue distribution, expressed in latex.

Its subcellular location is the secreted. Functionally, cysteine protease. In Jacaratia mexicana (Wild papaya), this protein is Mexicain.